Reading from the N-terminus, the 190-residue chain is Thiamine biosynthesis protein X (190 aa).

The N-terminal stretch at 1–22 is a signal peptide; it reads MSISRTVFGIAATAALSAALVA. Cys23 carries the N-palmitoyl cysteine lipid modification. Cys23 carries the S-diacylglycerol cysteine lipid modification. The tract at residues 43 to 68 is disordered; that stretch reads SQNPTSASSTSTSSATTTSSAPVEED. Positions 47–63 are enriched in low complexity; the sequence is TSASSTSTSSATTTSSA.

Its subcellular location is the cell membrane. In terms of biological role, is necessary for biosynthesis of the 4-methyl-5-(beta-hydroxyethyl)thiazol component from which thiamine is formed. The sequence is that of Thiamine biosynthesis protein X (thiX) from Corynebacterium glutamicum (strain ATCC 13032 / DSM 20300 / JCM 1318 / BCRC 11384 / CCUG 27702 / LMG 3730 / NBRC 12168 / NCIMB 10025 / NRRL B-2784 / 534).